We begin with the raw amino-acid sequence, 616 residues long: Dihydroxy-acid dehydratase (616 aa).

Asp-81 contacts Mg(2+). Cys-122 serves as a coordination point for [2Fe-2S] cluster. Positions 123 and 124 each coordinate Mg(2+). At Lys-124 the chain carries N6-carboxylysine. [2Fe-2S] cluster is bound at residue Cys-195. Position 491 (Glu-491) interacts with Mg(2+). Residue Ser-517 is the Proton acceptor of the active site.

Belongs to the IlvD/Edd family. In terms of assembly, homodimer. [2Fe-2S] cluster is required as a cofactor. The cofactor is Mg(2+).

It carries out the reaction (2R)-2,3-dihydroxy-3-methylbutanoate = 3-methyl-2-oxobutanoate + H2O. It catalyses the reaction (2R,3R)-2,3-dihydroxy-3-methylpentanoate = (S)-3-methyl-2-oxopentanoate + H2O. Its pathway is amino-acid biosynthesis; L-isoleucine biosynthesis; L-isoleucine from 2-oxobutanoate: step 3/4. The protein operates within amino-acid biosynthesis; L-valine biosynthesis; L-valine from pyruvate: step 3/4. Functionally, functions in the biosynthesis of branched-chain amino acids. Catalyzes the dehydration of (2R,3R)-2,3-dihydroxy-3-methylpentanoate (2,3-dihydroxy-3-methylvalerate) into 2-oxo-3-methylpentanoate (2-oxo-3-methylvalerate) and of (2R)-2,3-dihydroxy-3-methylbutanoate (2,3-dihydroxyisovalerate) into 2-oxo-3-methylbutanoate (2-oxoisovalerate), the penultimate precursor to L-isoleucine and L-valine, respectively. This chain is Dihydroxy-acid dehydratase, found in Shigella boydii serotype 4 (strain Sb227).